The primary structure comprises 1052 residues: Protein argonaute 14 (1052 aa).

Gly residues predominate over residues 1–39 (MASRGGDGLVGGGRGPLGGRDGRGRGPAGGRGGGRGGGH). Disordered regions lie at residues 1–127 (MASR…TPAV) and 170–194 (GGRP…APPS). A compositionally biased stretch (low complexity) spans 40-49 (PQQQQQQQPG). Composition is skewed to gly residues over residues 50-59 (YGRGDGGGRG) and 66-81 (GVVG…GGRG). The segment covering 97–117 (VRPAMAAAPAASTPGPVAVAA) has biased composition (low complexity). Residues 173–183 (PAPPAAPPAPI) show a composition bias toward pro residues. In terms of domain architecture, PAZ spans 394-510 (SVVEYVKNCL…LPMEVCTIVE (117 aa)). One can recognise a Piwi domain in the interval 677–1009 (LLIVILPDVN…AAFRARYYDE (333 aa)).

It belongs to the argonaute family. Ago subfamily. In terms of tissue distribution, expressed in seeds.

Its function is as follows. Probably involved in the RNA silencing pathway. May bind to short RNAs such as microRNAs (miRNAs) or short interfering RNAs (siRNAs), and represses the translation of mRNAs which are complementary to them. The polypeptide is Protein argonaute 14 (AGO14) (Oryza sativa subsp. japonica (Rice)).